The following is a 366-amino-acid chain: Glutamate 5-kinase (366 aa).

K17 serves as a coordination point for ATP. Substrate-binding residues include S57, D144, and N156. Residues 176 to 177 and 216 to 222 each bind ATP; these read SD and TGGMASK. Residues 278–352 form the PUA domain; sequence QGILHIDEGA…GKSTQELPAE (75 aa).

Belongs to the glutamate 5-kinase family.

It is found in the cytoplasm. It catalyses the reaction L-glutamate + ATP = L-glutamyl 5-phosphate + ADP. The protein operates within amino-acid biosynthesis; L-proline biosynthesis; L-glutamate 5-semialdehyde from L-glutamate: step 1/2. Functionally, catalyzes the transfer of a phosphate group to glutamate to form L-glutamate 5-phosphate. This Rhodococcus opacus (strain B4) protein is Glutamate 5-kinase.